Consider the following 410-residue polypeptide: Peptidase T (410 aa).

A Zn(2+)-binding site is contributed by histidine 77. The active site involves aspartate 79. Aspartate 140 is a Zn(2+) binding site. Glutamate 174 acts as the Proton acceptor in catalysis. Glutamate 175, aspartate 197, and histidine 379 together coordinate Zn(2+).

The protein belongs to the peptidase M20B family. Requires Zn(2+) as cofactor.

Its subcellular location is the cytoplasm. It carries out the reaction Release of the N-terminal residue from a tripeptide.. In terms of biological role, cleaves the N-terminal amino acid of tripeptides. This chain is Peptidase T, found in Desulfitobacterium hafniense (strain DSM 10664 / DCB-2).